We begin with the raw amino-acid sequence, 1280 residues long: Fibronectin type III domain-containing protein (1280 aa).

A signal peptide spans 1–19 (MWQILLAISIFSLSKLSNA). Residues 20–1156 (QQQPKVAPPQ…RVSTPIYQSA (1137 aa)) are Extracellular-facing. 5 disulfide bridges follow: cysteine 58/cysteine 111, cysteine 268/cysteine 321, cysteine 369/cysteine 417, cysteine 460/cysteine 511, and cysteine 553/cysteine 604. 5 Fibronectin type-III domains span residues 628 to 722 (PFPP…TGSF), 730 to 824 (PEKW…VKQF), 830 to 933 (PTGK…VAAD), 939 to 1033 (PGPP…TEKT), and 1039 to 1131 (PAKP…PASD). The span at 1118–1130 (YPSQENPQESPAS) shows a compositional bias: polar residues. The tract at residues 1118-1144 (YPSQENPQESPASDITEARPRPGISNV) is disordered. Residues 1157–1177 (WFIALLVLIALLLLVLLTFVL) traverse the membrane as a helical segment. The Cytoplasmic segment spans residues 1178–1280 (YTRHQGAKYL…KDPSSLATFV (103 aa)). The interval 1206–1280 (DEEEGSFSNN…KDPSSLATFV (75 aa)) is disordered. Positions 1262-1273 (DEKKAPPEEKDP) are enriched in basic and acidic residues.

As to expression, component of the acid-insoluble organic matrix of the aragonitic skeleton (at protein level).

The protein resides in the membrane. This chain is Fibronectin type III domain-containing protein, found in Acropora millepora (Staghorn coral).